The sequence spans 469 residues: Probable cobyric acid synthase (469 aa).

Residues 241–427 (SGSIGIVRYP…VHGILENNEF (187 aa)) enclose the GATase cobBQ-type domain. The Nucleophile role is filled by Cys319. His419 is an active-site residue.

It belongs to the CobB/CobQ family. CobQ subfamily.

It participates in cofactor biosynthesis; adenosylcobalamin biosynthesis. In terms of biological role, catalyzes amidations at positions B, D, E, and G on adenosylcobyrinic A,C-diamide. NH(2) groups are provided by glutamine, and one molecule of ATP is hydrogenolyzed for each amidation. This chain is Probable cobyric acid synthase, found in Picrophilus torridus (strain ATCC 700027 / DSM 9790 / JCM 10055 / NBRC 100828 / KAW 2/3).